Reading from the N-terminus, the 294-residue chain is Energy-coupling factor transporter ATP-binding protein EcfA1 (294 aa).

Residues 27–260 (IEFENVYFAY…EERLLKMQLD (234 aa)) enclose the ABC transporter domain. An ATP-binding site is contributed by 60–67 (GHNGSGKS).

The protein belongs to the ABC transporter superfamily. Energy-coupling factor EcfA family. In terms of assembly, forms a stable energy-coupling factor (ECF) transporter complex composed of 2 membrane-embedded substrate-binding proteins (S component), 2 ATP-binding proteins (A component) and 2 transmembrane proteins (T component).

It is found in the cell membrane. ATP-binding (A) component of a common energy-coupling factor (ECF) ABC-transporter complex. Unlike classic ABC transporters this ECF transporter provides the energy necessary to transport a number of different substrates. The chain is Energy-coupling factor transporter ATP-binding protein EcfA1 from Ureaplasma parvum serovar 3 (strain ATCC 700970).